The chain runs to 278 residues: Tryptophan synthase alpha chain (278 aa).

Residues glutamate 50 and aspartate 61 each act as proton acceptor in the active site.

The protein belongs to the TrpA family. In terms of assembly, tetramer of two alpha and two beta chains.

It catalyses the reaction (1S,2R)-1-C-(indol-3-yl)glycerol 3-phosphate + L-serine = D-glyceraldehyde 3-phosphate + L-tryptophan + H2O. It functions in the pathway amino-acid biosynthesis; L-tryptophan biosynthesis; L-tryptophan from chorismate: step 5/5. In terms of biological role, the alpha subunit is responsible for the aldol cleavage of indoleglycerol phosphate to indole and glyceraldehyde 3-phosphate. The protein is Tryptophan synthase alpha chain of Nitrobacter winogradskyi (strain ATCC 25391 / DSM 10237 / CIP 104748 / NCIMB 11846 / Nb-255).